The primary structure comprises 106 residues: SDO1-like protein C21C3.19 (106 aa).

Belongs to the SDO1-like family.

It localises to the cytoplasm. The protein resides in the nucleus. Functionally, may play a role in RNA metabolism. This chain is SDO1-like protein C21C3.19, found in Schizosaccharomyces pombe (strain 972 / ATCC 24843) (Fission yeast).